A 305-amino-acid chain; its full sequence is NAD kinase (305 aa).

Aspartate 82 (proton acceptor) is an active-site residue. NAD(+)-binding positions include 82-83 (DG), 156-157 (ND), arginine 184, aspartate 186, 197-202 (TAYALS), alanine 221, and glutamine 255.

Belongs to the NAD kinase family. A divalent metal cation serves as cofactor.

It is found in the cytoplasm. It carries out the reaction NAD(+) + ATP = ADP + NADP(+) + H(+). Involved in the regulation of the intracellular balance of NAD and NADP, and is a key enzyme in the biosynthesis of NADP. Catalyzes specifically the phosphorylation on 2'-hydroxyl of the adenosine moiety of NAD to yield NADP. The protein is NAD kinase of Cupriavidus pinatubonensis (strain JMP 134 / LMG 1197) (Cupriavidus necator (strain JMP 134)).